Here is a 273-residue protein sequence, read N- to C-terminus: Large ribosomal subunit protein uL2 (273 aa).

Positions 221-273 (RGTAMNPVDHPHGGGEGRNFGKHPVTPWGIQTKGKKTRSNKRTDKFIVRRRSK) are disordered.

It belongs to the universal ribosomal protein uL2 family. In terms of assembly, part of the 50S ribosomal subunit. Forms a bridge to the 30S subunit in the 70S ribosome.

Its function is as follows. One of the primary rRNA binding proteins. Required for association of the 30S and 50S subunits to form the 70S ribosome, for tRNA binding and peptide bond formation. It has been suggested to have peptidyltransferase activity; this is somewhat controversial. Makes several contacts with the 16S rRNA in the 70S ribosome. The polypeptide is Large ribosomal subunit protein uL2 (Sodalis glossinidius (strain morsitans)).